A 366-amino-acid polypeptide reads, in one-letter code: tRNA-queuosine alpha-mannosyltransferase (366 aa).

This sequence belongs to the glycosyltransferase group 1 family. Glycosyltransferase 4 subfamily.

It is found in the cytoplasm. Its subcellular location is the nucleus. It carries out the reaction queuosine(34) in tRNA(Asp) + GDP-alpha-D-mannose = O-4''-alpha-D-mannosylqueuosine(34) in tRNA(Asp) + GDP + H(+). Glycosyltransferase that specifically catalyzes mannosylation of cytoplasmic tRNA(Asp) modified with queuosine at position 34 (queuosine(34)). Mannosylates the cyclopentene moiety of queuosine(34) in tRNA(Asp) to form mannosyl-queuosine(34). Mannosylation of queuosine(34) in tRNA(Asp) is required to slow-down elongation at cognate codons, GAC and GAU, thereby regulating protein translation. The chain is tRNA-queuosine alpha-mannosyltransferase (GTDC1) from Bos taurus (Bovine).